The sequence spans 340 residues: Zinc finger protein 367 (340 aa).

The interval 101–140 (GAPQSSASVAAVSGGEDEEEASSPDSGHLKDGIRRGRPRA) is disordered. Positions 127 to 140 (GHLKDGIRRGRPRA) are enriched in basic and acidic residues. 2 C2H2-type zinc fingers span residues 157 to 179 (IRCN…KRTH) and 185 to 209 (YLCD…QRLH). Positions 280–317 (KGKLVQKADQEQQDPLEYLQSDEEDDEKSGAQRRLQEQ) are disordered. Residues 299-332 (QSDEEDDEKSGAQRRLQEQRERLHGALALIELAN) are a coiled coil. Ser300 carries the post-translational modification Phosphoserine. Basic and acidic residues predominate over residues 307–317 (KSGAQRRLQEQ).

This sequence belongs to the krueppel C2H2-type zinc-finger protein family. In terms of tissue distribution, expressed in bone marrow and ovary.

The protein localises to the nucleus. Transcriptional activator. Isoform 1 may be involved in transcriptional activation of erythroid genes. This is Zinc finger protein 367 (Znf367) from Mus musculus (Mouse).